We begin with the raw amino-acid sequence, 52 residues long: Rubredoxin (52 aa).

Residues 1–52 enclose the Rubredoxin-like domain; that stretch reads MEKWQCTVCGYIYDPEVGDPTQNIPPGTKFEDLPDDWVCPDCGVGKDQFEKI. Fe cation contacts are provided by Cys-6, Cys-9, Cys-39, and Cys-42.

It belongs to the rubredoxin family. It depends on Fe(3+) as a cofactor.

Its function is as follows. Rubredoxin is a small nonheme, iron protein lacking acid-labile sulfide. Its single Fe, chelated to 4 Cys, functions as an electron acceptor and may also stabilize the conformation of the molecule. The chain is Rubredoxin from Thermoanaerobacterium thermosaccharolyticum (strain ATCC 7956 / DSM 571 / NCIMB 9385 / NCA 3814 / NCTC 13789 / WDCM 00135 / 2032) (Clostridium thermosaccharolyticum).